The chain runs to 1218 residues: ATP-dependent helicase/deoxyribonuclease subunit B (1218 aa).

The UvrD-like helicase ATP-binding domain maps to Met1–Glu279. Residue Gly6–Ser13 participates in ATP binding. The UvrD-like helicase C-terminal domain occupies Ala281 to Asn588. Cys786 is a binding site for [4Fe-4S] cluster. The segment at Leu987–Ser1006 is disordered. Positions 1126, 1129, and 1135 each coordinate [4Fe-4S] cluster. Residues Arg1160–Tyr1169 show a composition bias toward polar residues. Residues Arg1160 to Glu1218 are disordered. The span at Gly1209 to Glu1218 shows a compositional bias: basic and acidic residues.

This sequence belongs to the helicase family. AddB/RexB type 1 subfamily. In terms of assembly, heterodimer of AddA and AddB. Mg(2+) serves as cofactor. [4Fe-4S] cluster is required as a cofactor.

Functionally, the heterodimer acts as both an ATP-dependent DNA helicase and an ATP-dependent, dual-direction single-stranded exonuclease. Recognizes the chi site generating a DNA molecule suitable for the initiation of homologous recombination. The AddB subunit has 5' -&gt; 3' nuclease activity but not helicase activity. In Desulfitobacterium hafniense (strain DSM 10664 / DCB-2), this protein is ATP-dependent helicase/deoxyribonuclease subunit B.